A 153-amino-acid polypeptide reads, in one-letter code: SsrA-binding protein (153 aa).

The protein belongs to the SmpB family.

It localises to the cytoplasm. Its function is as follows. Required for rescue of stalled ribosomes mediated by trans-translation. Binds to transfer-messenger RNA (tmRNA), required for stable association of tmRNA with ribosomes. tmRNA and SmpB together mimic tRNA shape, replacing the anticodon stem-loop with SmpB. tmRNA is encoded by the ssrA gene; the 2 termini fold to resemble tRNA(Ala) and it encodes a 'tag peptide', a short internal open reading frame. During trans-translation Ala-aminoacylated tmRNA acts like a tRNA, entering the A-site of stalled ribosomes, displacing the stalled mRNA. The ribosome then switches to translate the ORF on the tmRNA; the nascent peptide is terminated with the 'tag peptide' encoded by the tmRNA and targeted for degradation. The ribosome is freed to recommence translation, which seems to be the essential function of trans-translation. In Desulforudis audaxviator (strain MP104C), this protein is SsrA-binding protein.